The sequence spans 176 residues: Inner membrane-spanning protein YciB (176 aa).

5 consecutive transmembrane segments (helical) span residues 22–42 (IYYA…YTWL), 50–70 (VALI…YYHN), 81–101 (IYSL…KPLI), 121–141 (IAWA…AFWL), and 149–169 (FKVF…GIYI).

The protein belongs to the YciB family.

It localises to the cell inner membrane. In terms of biological role, plays a role in cell envelope biogenesis, maintenance of cell envelope integrity and membrane homeostasis. This chain is Inner membrane-spanning protein YciB, found in Sodalis glossinidius (strain morsitans).